A 457-amino-acid polypeptide reads, in one-letter code: Cysteine--tRNA ligase (457 aa).

Cys-27 is a Zn(2+) binding site. The 'HIGH' region motif lies at 29-39 (PTVYDFAHIGN). Residues Cys-211, His-236, and Glu-240 each coordinate Zn(2+). The 'KMSKS' region motif lies at 269–273 (KMSKS). Lys-272 is an ATP binding site.

This sequence belongs to the class-I aminoacyl-tRNA synthetase family. Monomer. It depends on Zn(2+) as a cofactor.

It is found in the cytoplasm. The catalysed reaction is tRNA(Cys) + L-cysteine + ATP = L-cysteinyl-tRNA(Cys) + AMP + diphosphate. The chain is Cysteine--tRNA ligase from Ehrlichia ruminantium (strain Welgevonden).